Consider the following 71-residue polypeptide: Protein SOM1, mitochondrial (71 aa).

It is found in the mitochondrion inner membrane. In terms of biological role, required for mitochondrial inner membrane peptidase function. The polypeptide is Protein SOM1, mitochondrial (SOM1) (Kluyveromyces lactis (strain ATCC 8585 / CBS 2359 / DSM 70799 / NBRC 1267 / NRRL Y-1140 / WM37) (Yeast)).